Consider the following 141-residue polypeptide: Large ribosomal subunit protein uL16 (141 aa).

The protein belongs to the universal ribosomal protein uL16 family. As to quaternary structure, part of the 50S ribosomal subunit.

Binds 23S rRNA and is also seen to make contacts with the A and possibly P site tRNAs. The sequence is that of Large ribosomal subunit protein uL16 from Kosmotoga olearia (strain ATCC BAA-1733 / DSM 21960 / TBF 19.5.1).